The sequence spans 284 residues: Putative transcription factor kapC (284 aa).

A compositionally biased stretch (pro residues) spans 1–10; the sequence is MQPTLAPAPH. The segment at 1–121 is disordered; the sequence is MQPTLAPAPH…NRAAQRAFRQ (121 aa). Over residues 26 to 40 the composition is skewed to low complexity; the sequence is HDQLLAAHQHLSHPQ. A compositionally biased stretch (pro residues) spans 41-54; sequence QPRPQPPAAQPPHM. A compositionally biased stretch (polar residues) spans 57–67; the sequence is NTTSPRDQNNI. Residues 102–165 form the bZIP domain; the sequence is PLSTSKRAAQ…EYIINLQSRL (64 aa). Positions 103 to 126 are basic motif; that stretch reads LSTSKRAAQNRAAQRAFRQRKESY. Residues 108–118 are compositionally biased toward low complexity; sequence RAAQNRAAQRA. A leucine-zipper region spans residues 130 to 161; it reads LEEQVKEFDTMSEAFKALQAENYQLREYIINL. The disordered stretch occupies residues 174 to 284; sequence ELPGNIDLSQ…QAPHGLPMVS (111 aa). The segment covering 193-222 has biased composition (low complexity); that stretch reads PGAGPATTSSSAPAPPSGAQQAQPPQGAAS.

This sequence belongs to the bZIP family.

Its subcellular location is the nucleus. Functionally, putative transcription factor. This Aspergillus oryzae (strain ATCC 42149 / RIB 40) (Yellow koji mold) protein is Putative transcription factor kapC (kapC).